The chain runs to 155 residues: Nucleosome assembly protein 1-like 5 (155 aa).

Positions 1–16 (MADPEKQGPAESRAED) are enriched in basic and acidic residues. Positions 1–60 (MADPEKQGPAESRAEDEVMEGAQGGEDAATGDSATAPAAEEPQAPAENAPKPKNDFIESL) are disordered. Low complexity predominate over residues 27–49 (DAATGDSATAPAAEEPQAPAENA). Positions 68 to 94 (VLALKKLQKRCDKIEAKFDKEFQALEK) form a coiled coil. A disordered region spans residues 119 to 155 (WTLEGEDDEDDEEEEDEEEEEEEAAAGATGGPDSAEK). The segment covering 122 to 142 (EGEDDEDDEEEEDEEEEEEEA) has biased composition (acidic residues).

This sequence belongs to the nucleosome assembly protein (NAP) family.

It is found in the nucleus. The sequence is that of Nucleosome assembly protein 1-like 5 (Nap1l5) from Rattus norvegicus (Rat).